The chain runs to 412 residues: Multifunctional CCA protein (412 aa).

Residues G8 and R11 each coordinate ATP. Positions 8 and 11 each coordinate CTP. Mg(2+) contacts are provided by D21 and D23. ATP is bound by residues R91, R137, and R140. CTP is bound by residues R91, R137, and R140. Positions 228-329 constitute an HD domain; sequence TGIHTLMTLS…VKLFDSIDAW (102 aa).

Belongs to the tRNA nucleotidyltransferase/poly(A) polymerase family. Bacterial CCA-adding enzyme type 1 subfamily. Monomer. Can also form homodimers and oligomers. Mg(2+) is required as a cofactor. Requires Ni(2+) as cofactor.

It catalyses the reaction a tRNA precursor + 2 CTP + ATP = a tRNA with a 3' CCA end + 3 diphosphate. The enzyme catalyses a tRNA with a 3' CCA end + 2 CTP + ATP = a tRNA with a 3' CCACCA end + 3 diphosphate. Its function is as follows. Catalyzes the addition and repair of the essential 3'-terminal CCA sequence in tRNAs without using a nucleic acid template. Adds these three nucleotides in the order of C, C, and A to the tRNA nucleotide-73, using CTP and ATP as substrates and producing inorganic pyrophosphate. tRNA 3'-terminal CCA addition is required both for tRNA processing and repair. Also involved in tRNA surveillance by mediating tandem CCA addition to generate a CCACCA at the 3' terminus of unstable tRNAs. While stable tRNAs receive only 3'-terminal CCA, unstable tRNAs are marked with CCACCA and rapidly degraded. This Shigella flexneri protein is Multifunctional CCA protein.